The following is a 28-amino-acid chain: EYCGESCYLIPCFTPGCYCVSRQCVNKN.

Positions 1–28 (EYCGESCYLIPCFTPGCYCVSRQCVNKN) form a cross-link, cyclopeptide (Glu-Asn). Intrachain disulfides connect Cys3-Cys17, Cys7-Cys19, and Cys12-Cys24.

In terms of processing, this is a cyclic peptide. Expressed in fruit, pedicel, leaf and stem but not in root (at protein level).

Probably participates in a plant defense mechanism. The sequence is that of Chassatide C12 from Chassalia chartacea (Chassalia curviflora).